Consider the following 303-residue polypeptide: Putative S-adenosyl-L-methionine-dependent methyltransferase MAV_4435 (303 aa).

S-adenosyl-L-methionine contacts are provided by residues aspartate 129 and 158–159 (DL).

This sequence belongs to the UPF0677 family.

In terms of biological role, exhibits S-adenosyl-L-methionine-dependent methyltransferase activity. This chain is Putative S-adenosyl-L-methionine-dependent methyltransferase MAV_4435, found in Mycobacterium avium (strain 104).